We begin with the raw amino-acid sequence, 39 residues long: Decorsin (39 aa).

A high affinity binding domain region spans residues 27 to 38; that stretch reads CRFPRGDADPYC. The Cell attachment site signature appears at 31 to 33; that stretch reads RGD.

The protein belongs to the ornatin family.

It is found in the secreted. Inhibits fibrinogen interaction with platelet receptors expressed on glycoprotein IIb-IIIa complex. May prevent blood from clotting during either feeding and/or storage of ingested blood. This chain is Decorsin, found in Macrobdella decora (North American leech).